An 81-amino-acid polypeptide reads, in one-letter code: Sulfur carrier protein TusA (81 aa).

Cys-19 acts as the Cysteine persulfide intermediate in catalysis.

This sequence belongs to the sulfur carrier protein TusA family.

Its subcellular location is the cytoplasm. Sulfur carrier protein which probably makes part of a sulfur-relay system. The chain is Sulfur carrier protein TusA from Shewanella oneidensis (strain ATCC 700550 / JCM 31522 / CIP 106686 / LMG 19005 / NCIMB 14063 / MR-1).